The primary structure comprises 237 residues: Lipoprotein-releasing system ATP-binding protein LolD (237 aa).

The ABC transporter domain maps to 8–236 (ISVTDLRKTF…EAIKKSVKTA (229 aa)). Position 40–47 (40–47 (GKSGSGKS)) interacts with ATP.

The protein belongs to the ABC transporter superfamily. Lipoprotein translocase (TC 3.A.1.125) family. The complex is composed of two ATP-binding proteins (LolD) and two transmembrane proteins (LolC and LolE).

Its subcellular location is the cell inner membrane. In terms of biological role, part of the ABC transporter complex LolCDE involved in the translocation of mature outer membrane-directed lipoproteins, from the inner membrane to the periplasmic chaperone, LolA. Responsible for the formation of the LolA-lipoprotein complex in an ATP-dependent manner. This Leptospira interrogans serogroup Icterohaemorrhagiae serovar Lai (strain 56601) protein is Lipoprotein-releasing system ATP-binding protein LolD.